Consider the following 40-residue polypeptide: Dolichyl-diphosphooligosaccharide--protein glycosyltransferase subunit 4 (40 aa).

Residues Met-1 to Leu-7 lie on the Lumenal side of the membrane. Residues Ala-8 to Ile-28 traverse the membrane as a helical segment. The Cytoplasmic segment spans residues Asn-29–Lys-40.

It belongs to the OST4 family. As to quaternary structure, component of the oligosaccharyltransferase (OST) complex.

The protein resides in the endoplasmic reticulum membrane. In terms of biological role, subunit of the oligosaccharyl transferase (OST) complex that catalyzes the initial transfer of a defined glycan (Glc(3)Man(9)GlcNAc(2) in eukaryotes) from the lipid carrier dolichol-pyrophosphate to an asparagine residue within an Asn-X-Ser/Thr consensus motif in nascent polypeptide chains, the first step in protein N-glycosylation. N-glycosylation occurs cotranslationally and the complex associates with the Sec61 complex at the channel-forming translocon complex that mediates protein translocation across the endoplasmic reticulum (ER). All subunits are required for a maximal enzyme activity. In Drosophila sechellia (Fruit fly), this protein is Dolichyl-diphosphooligosaccharide--protein glycosyltransferase subunit 4.